The primary structure comprises 438 residues: RNA polymerase sigma factor SigA (438 aa).

The span at 1 to 11 shows a compositional bias: basic residues; the sequence is MKKSKSKKKAA. Residues 1 to 69 are disordered; the sequence is MKKSKSKKKA…PLDLEGPLEA (69 aa). Positions 12 to 26 are enriched in basic and acidic residues; that stretch reads KAQEVEVKEPVKEPE. 2 stretches are compositionally biased toward acidic residues: residues 27 to 45 and 52 to 69; these read PLPE…EPDP and PELE…PLEA. Positions 93 to 128 are sigma-70 factor domain-1; sequence SDPVRQYLHEIGQVPLLTLEEEIDLARKVEEGMEAI. Residues 202–272 form a sigma-70 factor domain-2 region; it reads LIEANLRLVV…NRAIADQART (71 aa). The Interaction with polymerase core subunit RpoC signature appears at 226-229; sequence DLIQ. The interval 281–359 is sigma-70 factor domain-3; it reads ETINKLSRTA…DENLPSPVEA (79 aa). The segment at 372–424 is sigma-70 factor domain-4; that stretch reads ALSKLSEREAMVLKLRKGLIDGREHTLEEVGAYFGVTRERIRQIENKALRKLK. A DNA-binding region (H-T-H motif) is located at residues 398–417; it reads LEEVGAYFGVTRERIRQIEN.

This sequence belongs to the sigma-70 factor family. RpoD/SigA subfamily. In terms of assembly, interacts transiently with the RNA polymerase catalytic core formed by RpoA, RpoB, RpoC and RpoZ (2 alpha, 1 beta, 1 beta' and 1 omega subunit) to form the RNA polymerase holoenzyme that can initiate transcription.

It localises to the cytoplasm. Sigma factors are initiation factors that promote the attachment of RNA polymerase to specific initiation sites and are then released. This sigma factor is the primary sigma factor during exponential growth. In Thermus aquaticus, this protein is RNA polymerase sigma factor SigA.